The chain runs to 515 residues: MKEAGQMQNLESARAGRSVSTQTGSMTGQIPRLSKVNLFTLLSLWMELFPAVEAQRQKSQKNEEGKHGPLGDNEEMTRVSTDKRQVKRTGLVVVKNMKIVGLHCSSEDLHAGQIALIKHGSRLKNCDLYFSRKPCSACLKMIVNAGVNRISYWPADPEISLLTEASSSEDAKLDAKAVERLKSNSRAHVCVLLQPLVCYMVQFVEETSYKCDFIQKITKTLPDANTDFYYECKQERIKEYEMLFLVSNEEMHKQILMTIGLENLCENPYFSNLRQNMKDLILLLATVASSVPNFKHFGFYCSNPEQINEIHNQSLPQEIARHCMVQARLLAYRTEDHKTGVGAVIWAEGKSRSCDGTGAMYFVGCGYNAFPVGSEYADFPHMDDKQKDREIRKFRYIIHAEQNALTFRCQEIKPEERSMIFVTKCPCDECVPLIKGAGIKQIYAGDVDVGKKKADISYMRFGELEGVSKFTWQLNPSEAYGLEQNEPERRENGVLRPVPQKEEQHQDKKLRLGIH.

2 stretches are compositionally biased toward polar residues: residues M1–E11 and S18–T27. Disordered stretches follow at residues M1–T27 and R56–K83. The segment covering Q60–K83 has biased composition (basic and acidic residues). In terms of domain architecture, CMP/dCMP-type deaminase 1 spans G71–E169. Zn(2+) is bound by residues H110, C135, and C138. Positions N272–L284 match the Nuclear export signal motif. The 166-residue stretch at E318–E483 folds into the CMP/dCMP-type deaminase 2 domain. H399 provides a ligand contact to Zn(2+). Residue E401 is the Proton donor of the active site. Residues C427 and C430 each coordinate Zn(2+). Residues G481–H515 form a disordered region. The span at E486–H515 shows a compositional bias: basic and acidic residues. A Bipartite nuclear localization signal motif is present at residues R489 to R511.

It belongs to the cytidine and deoxycytidylate deaminase family. Zn(2+) is required as a cofactor.

The protein resides in the cytoplasm. It is found in the nucleus. It carries out the reaction 2'-deoxycytidine + H2O + H(+) = 2'-deoxyuridine + NH4(+). The catalysed reaction is cytidine + H2O + H(+) = uridine + NH4(+). Catalyzes the deamination of cytidine and deoxycytidine into uridine and deoxyuridine, respectively. May play an important role in testicular development and spermatogenesis. In Macaca fascicularis (Crab-eating macaque), this protein is Cytidine and dCMP deaminase domain-containing protein 1 (CDADC1).